The primary structure comprises 389 residues: Chalcone synthase 4-2 (389 aa).

Cys164 is an active-site residue.

The protein belongs to the thiolase-like superfamily. Chalcone/stilbene synthases family.

The enzyme catalyses (E)-4-coumaroyl-CoA + 3 malonyl-CoA + 3 H(+) = 2',4,4',6'-tetrahydroxychalcone + 3 CO2 + 4 CoA. Its pathway is secondary metabolite biosynthesis; flavonoid biosynthesis. In terms of biological role, the primary product of this enzyme is 4,2',4',6'-tetrahydroxychalcone (also termed naringenin-chalcone or chalcone) which can under specific conditions spontaneously isomerize into naringenin. The sequence is that of Chalcone synthase 4-2 (CHS4-2) from Medicago sativa (Alfalfa).